The sequence spans 172 residues: Agamous-like MADS-box protein AGL29 (172 aa).

The MADS-box domain maps to 1–61 (MGRRKIKMEM…GKPFSYGKPN (61 aa)). Residues 86 to 123 (NYRPKLKRLSERLDLLNQEVEAEKERGEKSQEKLESAG) adopt a coiled-coil conformation. A disordered region spans residues 106–125 (EAEKERGEKSQEKLESAGDE).

As to expression, expressed in pollen.

It is found in the nucleus. In terms of biological role, probable transcription factor. In Arabidopsis thaliana (Mouse-ear cress), this protein is Agamous-like MADS-box protein AGL29.